Here is a 408-residue protein sequence, read N- to C-terminus: Aminoacylase-1 (408 aa).

His80 is a Zn(2+) binding site. Asp82 is an active-site residue. Position 113 (Asp113) interacts with Zn(2+). Glu147 (proton acceptor) is an active-site residue. Positions 148, 175, and 373 each coordinate Zn(2+).

This sequence belongs to the peptidase M20A family. In terms of assembly, homodimer. Interacts with SPHK1. Zn(2+) is required as a cofactor. Expression is highest in kidney, strong in brain and weaker in placenta and spleen.

It localises to the cytoplasm. It catalyses the reaction an N-acyl-L-amino acid + H2O = an L-alpha-amino acid + a carboxylate. It carries out the reaction N-acetyl-L-methionine + H2O = L-methionine + acetate. The catalysed reaction is N-acetyl-L-glutamine + H2O = L-glutamine + acetate. Functionally, catalyzes the hydrolysis of N-acetylated amino acids to acetate and free amino acids. This Homo sapiens (Human) protein is Aminoacylase-1 (ACY1).